Reading from the N-terminus, the 271-residue chain is NADPH-dependent 7-cyano-7-deazaguanine reductase (271 aa).

Substrate is bound at residue 81-83 (IES). 83–84 (SK) lines the NADPH pocket. Cysteine 177 (thioimide intermediate) is an active-site residue. Aspartate 184 serves as the catalytic Proton donor. Position 216-217 (216-217 (HE)) interacts with substrate. 245–246 (RG) contributes to the NADPH binding site.

This sequence belongs to the GTP cyclohydrolase I family. QueF type 2 subfamily. As to quaternary structure, homodimer.

Its subcellular location is the cytoplasm. It catalyses the reaction 7-aminomethyl-7-carbaguanine + 2 NADP(+) = 7-cyano-7-deazaguanine + 2 NADPH + 3 H(+). It participates in tRNA modification; tRNA-queuosine biosynthesis. In terms of biological role, catalyzes the NADPH-dependent reduction of 7-cyano-7-deazaguanine (preQ0) to 7-aminomethyl-7-deazaguanine (preQ1). The polypeptide is NADPH-dependent 7-cyano-7-deazaguanine reductase (Xanthomonas campestris pv. campestris (strain 8004)).